We begin with the raw amino-acid sequence, 337 residues long: Ribosomal RNA small subunit methyltransferase H (337 aa).

Residues A33–H35, D53, D101, and Q108 contribute to the S-adenosyl-L-methionine site.

The protein belongs to the methyltransferase superfamily. RsmH family.

The protein resides in the cytoplasm. It catalyses the reaction cytidine(1402) in 16S rRNA + S-adenosyl-L-methionine = N(4)-methylcytidine(1402) in 16S rRNA + S-adenosyl-L-homocysteine + H(+). Functionally, specifically methylates the N4 position of cytidine in position 1402 (C1402) of 16S rRNA. In Herpetosiphon aurantiacus (strain ATCC 23779 / DSM 785 / 114-95), this protein is Ribosomal RNA small subunit methyltransferase H.